A 358-amino-acid chain; its full sequence is Methylthioribose-1-phosphate isomerase (358 aa).

Residues 54-56 (RGA), Arg96, and Gln205 each bind substrate. Asp246 acts as the Proton donor in catalysis. 256–257 (AK) contacts substrate.

Belongs to the eIF-2B alpha/beta/delta subunits family. MtnA subfamily.

The catalysed reaction is 5-(methylsulfanyl)-alpha-D-ribose 1-phosphate = 5-(methylsulfanyl)-D-ribulose 1-phosphate. It functions in the pathway amino-acid biosynthesis; L-methionine biosynthesis via salvage pathway; L-methionine from S-methyl-5-thio-alpha-D-ribose 1-phosphate: step 1/6. Functionally, catalyzes the interconversion of methylthioribose-1-phosphate (MTR-1-P) into methylthioribulose-1-phosphate (MTRu-1-P). The sequence is that of Methylthioribose-1-phosphate isomerase from Pseudomonas entomophila (strain L48).